Here is a 55-residue protein sequence, read N- to C-terminus: Lantibiotic epilancin (55 aa).

Positions 1–24 (MNNSLFDLNLNKGVETQKSDLSPQ) are cleaved as a propeptide — cleaved by ElxP. Serine 25 carries the post-translational modification D-lactate; by the dehydratase ElxB and the dehydrogenase ElxO. Serine 27 carries the post-translational modification 2,3-didehydroalanine (Ser); by the dehydratase ElxB. Threonine 31 carries the 2,3-didehydrobutyrine; by the dehydratase ElxB modification. Position 32 is a 2,3-didehydroalanine (Ser); by the dehydratase ElxB (serine 32). The lanthionine (Ser-Cys); by the dehydratase ElxB and the cyclase ElxC cross-link spans 36-40 (SKKYC). Cross-links (beta-methyllanthionine (Thr-Cys); by the dehydratase ElxB and the cyclase ElxC) lie at residues 44-47 (TLTC) and 46-49 (TCGC). Residue threonine 52 is modified to 2,3-didehydrobutyrine; by the dehydratase ElxB.

The protein belongs to the type A lantibiotic family. In terms of processing, maturation of this lantibiotic involves the enzymatic conversion of Thr, and Ser into dehydrated AA by ElxB and the formation of thioether bonds with cysteine by the cyclase ElxC. The next steps are cleavage of the leader peptide by ElxP and membrane translocation by ElxT. The leader peptide may be removed before membrane translocation, in contrast to other lantibiotics for which the cleavage occur after translocation. This is suggested by the probable cytoplasmic localization of the serine protease ElxP that cleaves the leader peptide. It is not established whether the 2,3-didehydrobutyrine is the E- or Z-isomer. Post-translationally, the N-terminal D-lactate is probably produced by dehydration of Ser-25 by ElxB, followed by proteolytic removal of the leader peptide by the serine protease ElxP and hydrolysis of the resulting new N-terminal dehydroalanine. This hydrolysis may occur spontaneously. The pyruvate group thus formed is reduced to D-lactate by the NADPH-dependent oxidoreductase ElxO. This N-terminal D-lactate protects the lantibiotic against degradation against aminopeptidase.

Its function is as follows. Lanthionine-containing peptide antibiotic (lantibiotic) active on Gram-positive bacteria such as staphylococci, enterococci and streptococci. The bactericidal activity of lantibiotics is based on depolarization of energized bacterial cytoplasmic membranes, initiated by the formation of aqueous transmembrane pores. The sequence is that of Lantibiotic epilancin (elkA) from Staphylococcus epidermidis.